The primary structure comprises 238 residues: MLEVILNTPAQLSLPLYLPDDETFASFYPGENASLLAAVNNALYQEHGSYIYFWSREGGGRSHLLHAACAELSRQERAVGYVPLDKRAYFVPDVLEGMEQLALVCIDNIESIAGDEAWEMAVFNLYNRIQETGRALLLITGDRPPRQLNIRLPDLASRLDWGQIYKLQPLSDDEKGEALQLRARLRGFELPEDVSRFLLKRLDREMRTLFMTLDQLDHASITAQRKLTIPFVKEILGL.

This sequence belongs to the DnaA family. HdA subfamily. The active form seems to be an ADP-bound monomer. Forms the RIDA complex (regulatory inactivation of DnaA) of ATP-DnaA, ADP-Hda and the DNA-loaded beta sliding clamp (dnaN).

Functionally, mediates the interaction of DNA replication initiator protein DnaA with DNA polymerase subunit beta sliding clamp (dnaN). Stimulates hydrolysis of ATP-DnaA to ADP-DnaA, rendering DnaA inactive for reinitiation, a process called regulatory inhibition of DnaA or RIDA. This Pectobacterium atrosepticum (strain SCRI 1043 / ATCC BAA-672) (Erwinia carotovora subsp. atroseptica) protein is DnaA regulatory inactivator Hda.